The following is a 130-amino-acid chain: Ribosome biogenesis inhibitor MINAS-60 (130 aa).

The segment at 61-130 (SKVQRIPTRP…RRRRPVTSSC (70 aa)) is disordered. The span at 109–130 (KGRRRRRRMRRRRRRRPVTSSC) shows a compositional bias: basic residues.

As to quaternary structure, interacts with 60S ribosome assembly factors GTPBP4 and MRTO4.

The protein resides in the nucleus. It is found in the nucleolus. Its function is as follows. Acts as a late-stage inhibitor of pre-60S ribosome assembly by preventing pre-60S ribosome export from nucleus. The protein is Ribosome biogenesis inhibitor MINAS-60 of Mus musculus (Mouse).